A 241-amino-acid chain; its full sequence is MNPEQFQQALADHGITLSAEQMQQFADYYQLLVETNEHVNLTRITEKNEVYLKHFYDSITGAFAEPRLESEDLTLCDIGAGAGFPSLPLKIAFPQLKVTIVDSLNKRIAFLEDLVAKLGLTGVTLIHDRAETFSAKTSPYREKFDIVTARAVARLSVLSELCLPAAKVGGEFIAYKASAAPEELQQGGTAIKQLGGKVQKTVTLTLPGTDEERNIIVIDKIKATPKKYPRRPGLPSKKPIQ.

S-adenosyl-L-methionine contacts are provided by residues Gly-79, Phe-84, 130–131 (AE), and Arg-150.

The protein belongs to the methyltransferase superfamily. RNA methyltransferase RsmG family.

The protein localises to the cytoplasm. In terms of biological role, specifically methylates the N7 position of a guanine in 16S rRNA. The sequence is that of Ribosomal RNA small subunit methyltransferase G from Limosilactobacillus reuteri (strain DSM 20016) (Lactobacillus reuteri).